The following is a 469-amino-acid chain: Probable cobyric acid synthase (469 aa).

A GATase cobBQ-type domain is found at 241–427 (SGSIGIVRYP…VHGILENNEF (187 aa)). Cys-319 acts as the Nucleophile in catalysis. Residue His-419 is part of the active site.

The protein belongs to the CobB/CobQ family. CobQ subfamily.

The protein operates within cofactor biosynthesis; adenosylcobalamin biosynthesis. Catalyzes amidations at positions B, D, E, and G on adenosylcobyrinic A,C-diamide. NH(2) groups are provided by glutamine, and one molecule of ATP is hydrogenolyzed for each amidation. The chain is Probable cobyric acid synthase from Picrophilus torridus (strain ATCC 700027 / DSM 9790 / JCM 10055 / NBRC 100828 / KAW 2/3).